The primary structure comprises 221 residues: Probable nicotinate-nucleotide adenylyltransferase (221 aa).

This sequence belongs to the NadD family.

The enzyme catalyses nicotinate beta-D-ribonucleotide + ATP + H(+) = deamido-NAD(+) + diphosphate. Its pathway is cofactor biosynthesis; NAD(+) biosynthesis; deamido-NAD(+) from nicotinate D-ribonucleotide: step 1/1. In terms of biological role, catalyzes the reversible adenylation of nicotinate mononucleotide (NaMN) to nicotinic acid adenine dinucleotide (NaAD). The protein is Probable nicotinate-nucleotide adenylyltransferase of Marinomonas sp. (strain MWYL1).